We begin with the raw amino-acid sequence, 469 residues long: MMKNRVTNIHFVGIGGVGMSGIAEVLHNLGFKVSGSDQARNAATEHLGSLGIQVYPGHTAEHVNGADVVVTSTAVKKENPEVVAALEQQIPVIPRALMLAELMRFRDGIAIAGTHGKTTTTSLTASILGAAGLDPTFVIGGKLNAAGTNARLGKGEYIVAEADESDASFLHLTPIMSVVTNIDEDHMDTYGHSVEKLHQAFIDFIHRMPFYGKAFLCIDSEHVRAILPKVSKPYATYGLDDTADIYATDIENVGAQMKFTVHVQMKGHEQGSFEVVLNMPGRHNVLNALAAIGVALEVGASVEAIQKGLLGFEGVGRRFQKYGDIKLPNGGTALLVDDYGHHPVEMAATLAAARGAYPEKRLVLAFQPHRYTRTRDLFEDFTKVLNTVDALVLTEVYAAGEEPIAAADSRALARAIRVLGKLEPIYCENVADLPEMLLNVLQDGDIVLNMGAGSINRVPAALLELSKQI.

Residue 113–119 (GTHGKTT) coordinates ATP.

The protein belongs to the MurCDEF family.

The protein resides in the cytoplasm. It carries out the reaction UDP-N-acetyl-alpha-D-muramate + L-alanine + ATP = UDP-N-acetyl-alpha-D-muramoyl-L-alanine + ADP + phosphate + H(+). It participates in cell wall biogenesis; peptidoglycan biosynthesis. Its function is as follows. Cell wall formation. The protein is UDP-N-acetylmuramate--L-alanine ligase of Neisseria meningitidis serogroup C / serotype 2a (strain ATCC 700532 / DSM 15464 / FAM18).